Reading from the N-terminus, the 79-residue chain is Acyl carrier protein (79 aa).

A Carrier domain is found at Ser-2–Lys-77. Ser-37 carries the post-translational modification O-(pantetheine 4'-phosphoryl)serine.

This sequence belongs to the acyl carrier protein (ACP) family. 4'-phosphopantetheine is transferred from CoA to a specific serine of apo-ACP by AcpS. This modification is essential for activity because fatty acids are bound in thioester linkage to the sulfhydryl of the prosthetic group.

The protein resides in the cytoplasm. It functions in the pathway lipid metabolism; fatty acid biosynthesis. In terms of biological role, carrier of the growing fatty acid chain in fatty acid biosynthesis. In Gluconobacter oxydans (strain 621H) (Gluconobacter suboxydans), this protein is Acyl carrier protein.